A 195-amino-acid chain; its full sequence is CASP-like protein 1E2 (195 aa).

Residues 1–29 (MEVESKTSFGGMESKSKEVKVVTGGKLRP) are Cytoplasmic-facing. The helical transmembrane segment at 30 to 50 (FDLVLRVVALALTLVAAVLLG) threads the bilayer. At 51-82 (VDKQTKVVSLQLLPTLPPMDVPVTAKWRYLSA) the chain is on the extracellular side. A helical transmembrane segment spans residues 83–103 (FVYFVVSNAIACSYAALSLLL). Residues 104–122 (SVGNSKGNKGLGLAITVMD) are Cytoplasmic-facing. Residues 123–143 (LVMVALLFSSNGAAGAIGLMG) traverse the membrane as a helical segment. The Extracellular portion of the chain corresponds to 144–165 (YEGNSRVRWGKVCNVFGKFCNQ). Residues 166-186 (VAVALGLSFFGGLAFFLLVVM) traverse the membrane as a helical segment. Topologically, residues 187-195 (AAFALNKRH) are cytoplasmic.

This sequence belongs to the Casparian strip membrane proteins (CASP) family. In terms of assembly, homodimer and heterodimers.

The protein localises to the cell membrane. The chain is CASP-like protein 1E2 from Vitis vinifera (Grape).